We begin with the raw amino-acid sequence, 923 residues long: Periodic tryptophan protein 2 (923 aa).

5 WD repeats span residues 12-52, 53-93, 94-132, 144-183, and 189-228; these read GTVY…TFEY, EHRK…LHHF, NFKEKCSAVKFSPDGRLFALASGRFLQIWKTPDVNKDRQ, GHFQDITSLTWSQDSRFILTTSKDLSAKIWSVDSEEKNLA, and GHRDYVMGAFFSHDQEKIYTVSKDGAVFVWEFTKRPSDDD. Phosphoserine occurs at positions 225 and 232. WD repeat units follow at residues 258–297, 300–340, 343–382, 385–424, 428–470, 471–510, 513–552, and 575–614; these read ANQAKVKCVTFHPATRLLAVGFTSGEFRLYDLPDFTLIQQ, MGQN…YILK, GHFDSTNSLAYSPDGSRVVTASEDGKIKVWDITSGFCLAT, EHTSSVTAVQFAKRGQVMFSSSLDGTVRAWDLIRYRNFRT, TERI…DALS, GHEGPVSCLSFSQENSVLASASWDKTIRIWSIFGRSQQVE, EVYSDVLALSMRPDGKEVAVSTLKGQISIFNIEDAKQVGN, and ERSKFFTTIHYSFDGMAIVAGGNNNSICLYDVPNEVLLKR. S651 and S664 each carry phosphoserine. Residues 653–674 form a disordered region; it reads LEDRIDNSLPGSQRGGDLSTRK. Residues 676 to 714 form a WD 14 repeat; the sequence is RPEVRVTSVQFSPTANAFAAASTEGLLIYSTNDTILFDP. 2 stretches are compositionally biased toward acidic residues: residues 869-893 and 911-923; these read KDDADEDNEENEENDVVMESDDEEG and DSSDEEENEKELP. The tract at residues 869–923 is disordered; it reads KDDADEDNEENEENDVVMESDDEEGWIGFNGKDNKLPLSNENDSSDEEENEKELP. Phosphoserine occurs at positions 912 and 913.

It belongs to the WD repeat PWP2 family. In terms of assembly, interacts with snoRNA U3. Interacts with MPP10. Component of the ribosomal small subunit (SSU) processome composed of at least 40 protein subunits and snoRNA U3.

It localises to the nucleus. It is found in the nucleolus. In terms of biological role, required for bud-site selection and cell separation. Also involved in nucleolar processing of pre-18S ribosomal RNA. The chain is Periodic tryptophan protein 2 (PWP2) from Saccharomyces cerevisiae (strain ATCC 204508 / S288c) (Baker's yeast).